A 149-amino-acid polypeptide reads, in one-letter code: F420H(2)-dependent quinone reductase MT1299 (149 aa).

Coenzyme F420-(gamma-Glu)n is bound by residues 48-50, 54-59, 70-73, 81-85, and Y130; these read AKT, RTTSLT, VASK, and GWYHN.

This sequence belongs to the F420H(2)-dependent quinone reductase family.

It is found in the cell membrane. The enzyme catalyses oxidized coenzyme F420-(gamma-L-Glu)(n) + a quinol + H(+) = reduced coenzyme F420-(gamma-L-Glu)(n) + a quinone. Involved in a F420-dependent anti-oxidant mechanism that protects M.tuberculosis against oxidative stress and bactericidal agents. Catalyzes the F420H(2)-dependent two-electron reduction of quinones to dihydroquinones, thereby preventing the formation of cytotoxic semiquinones obtained by the one-electron reduction pathway. In vitro, catalyzes the reduction of menadione to menadiol; since menaquinone is the sole quinone electron carrier in the respiratory chain in M.tuberculosis, the physiological electron acceptor for Fqr-mediated F420H(2) oxidation is therefore likely to be the endogenous menaquinone found in the membrane fraction of M.tuberculosis. The polypeptide is F420H(2)-dependent quinone reductase MT1299 (Mycobacterium tuberculosis (strain CDC 1551 / Oshkosh)).